A 171-amino-acid polypeptide reads, in one-letter code: 3-hydroxydecanoyl-[acyl-carrier-protein] dehydratase (171 aa).

Histidine 70 is an active-site residue.

It belongs to the thioester dehydratase family. FabA subfamily. In terms of assembly, homodimer.

It localises to the cytoplasm. The enzyme catalyses a (3R)-hydroxyacyl-[ACP] = a (2E)-enoyl-[ACP] + H2O. It carries out the reaction (3R)-hydroxydecanoyl-[ACP] = (2E)-decenoyl-[ACP] + H2O. The catalysed reaction is (2E)-decenoyl-[ACP] = (3Z)-decenoyl-[ACP]. It participates in lipid metabolism; fatty acid biosynthesis. Functionally, necessary for the introduction of cis unsaturation into fatty acids. Catalyzes the dehydration of (3R)-3-hydroxydecanoyl-ACP to E-(2)-decenoyl-ACP and then its isomerization to Z-(3)-decenoyl-ACP. Can catalyze the dehydratase reaction for beta-hydroxyacyl-ACPs with saturated chain lengths up to 16:0, being most active on intermediate chain length. The chain is 3-hydroxydecanoyl-[acyl-carrier-protein] dehydratase from Pseudomonas putida (strain ATCC 700007 / DSM 6899 / JCM 31910 / BCRC 17059 / LMG 24140 / F1).